The chain runs to 496 residues: MYTPVILAIDEGTTNAKAIAVDERGRILAKAAVALQVTHPQPGRSEQDAMAIWRAVCQAAEVCLSSLHRAQVVGVAISNQRESVLIWDRQTGKPMTPLVSWQDRRAEKFCQALQGSAEARLIESRTGLQVDPLFPAAKLHAMLAELPNGVARAMQGELCIGTVDCWLNWQFSGGRAFSTDYSNAARTQLFNIHRGCWDEDLLALFGIPSVCLPAVTPSSALHGHTGVTGISGLAACVPIVALIGDSHAALYGQGITQSGEIKATYGTGSSLMTTINTPHLHATGLSTTIAWHDGELRYALEGNITHTGSGFAWIGQMLGVPSVTQLTELALSAESNQGVFFVPALSGLGAPYWDVQARGLLCGLCDATTPAIIARAGLEAIAYQVADVFFAMEQVSQAALPALRVDGGATQNRWLMQFQADLLQRPLIRNHNAEVSALGAAYLGGKMLGWWEHNEQIAALPREVEVIEPSATNHAILESYQQWRTAVARARLRPEA.

Residues 13-15 (TTN), T267, G308, and 408-412 (GATQN) contribute to the ATP site.

The protein belongs to the FGGY kinase family.

The enzyme catalyses apulose + ATP = apulose 4-phosphate + ADP + H(+). The protein operates within carbohydrate metabolism. Involved in catabolism of D-apiose. Catalyzes phosphorylation of apulose to form apulose 4-phosphate. This chain is Apulose kinase, found in Pectobacterium atrosepticum (strain SCRI 1043 / ATCC BAA-672) (Erwinia carotovora subsp. atroseptica).